The primary structure comprises 509 residues: MDIRAAEISKVIKDQIANFGTEAQVSEVGSVLSVGDGIARIHGLDNVQAGEMVEFANGVQGMALNLEADNVGVVIFGSDAEIKEGDNVKRTETIVDVPVGKALLGRVVDALGNPIDGKGPIETTERRRVELKAPGIIPRKSVDEPVQSGLKAIDALVPVGRGQRELIIGDRQTGKTAVAIDTFINQKTVNESDDESKKLYCVYVAVGQKRSTVAQIVKSLEENGAMEYSIVVAATASEPAPLQYLAPYTGCAMGEFFRDNGMHAVIVYDDLSKQAVAYRQMSLLLRRPPGREAYPGDVFYLHSRLLERAAKMNDDNGGGSLTALPIIETQAGDVSAYIPTNVISITDGQIFLETDLFYQGVRPAINVGLSVSRVGGAAQTKAMKKVSGSIKLELAQYREMAAFAQFGSDLDASTQKLLNRGARLTELLKQPQFSPMPFEEQTVSIFAGTNGYIDDVAVDRVTEYESQMLSFMRSEHADILKTIRDTGKFEDDTKAATVAALDAFAKQFA.

ATP is bound at residue 169-176 (GDRQTGKT).

The protein belongs to the ATPase alpha/beta chains family. As to quaternary structure, F-type ATPases have 2 components, CF(1) - the catalytic core - and CF(0) - the membrane proton channel. CF(1) has five subunits: alpha(3), beta(3), gamma(1), delta(1), epsilon(1). CF(0) has four main subunits: a(1), b(1), b'(1) and c(9-12).

Its subcellular location is the cell inner membrane. It carries out the reaction ATP + H2O + 4 H(+)(in) = ADP + phosphate + 5 H(+)(out). In terms of biological role, produces ATP from ADP in the presence of a proton gradient across the membrane. The alpha chain is a regulatory subunit. The chain is ATP synthase subunit alpha from Erythrobacter litoralis (strain HTCC2594).